Here is a 414-residue protein sequence, read N- to C-terminus: 26S proteasome regulatory subunit 6B homolog (414 aa).

The interval 1–33 is disordered; that stretch reads MAATMVLDPKPSSTPPPTLPNPYTTDSQSTDSE. The span at 21–30 shows a compositional bias: low complexity; it reads NPYTTDSQST. The stretch at 55-81 forms a coiled coil; the sequence is EYVKDELKNLKREQLRSQEEVKRIQSV. 202–209 contributes to the ATP binding site; that stretch reads GPPGTGKT.

It belongs to the AAA ATPase family.

It localises to the cytoplasm. The protein localises to the nucleus. In terms of biological role, the 26S proteasome is involved in the ATP-dependent degradation of ubiquitinated proteins. The regulatory (or ATPase) complex confers ATP dependency and substrate specificity to the 26S complex. The polypeptide is 26S proteasome regulatory subunit 6B homolog (Helianthus annuus (Common sunflower)).